A 435-amino-acid chain; its full sequence is tRNA(Ile)-lysidine synthase (435 aa).

Residue 25 to 30 coordinates ATP; sequence SGGLDS.

This sequence belongs to the tRNA(Ile)-lysidine synthase family.

It is found in the cytoplasm. The enzyme catalyses cytidine(34) in tRNA(Ile2) + L-lysine + ATP = lysidine(34) in tRNA(Ile2) + AMP + diphosphate + H(+). Ligates lysine onto the cytidine present at position 34 of the AUA codon-specific tRNA(Ile) that contains the anticodon CAU, in an ATP-dependent manner. Cytidine is converted to lysidine, thus changing the amino acid specificity of the tRNA from methionine to isoleucine. This is tRNA(Ile)-lysidine synthase from Photobacterium profundum (strain SS9).